The sequence spans 446 residues: Exodeoxyribonuclease 7 large subunit (446 aa).

The protein belongs to the XseA family. In terms of assembly, heterooligomer composed of large and small subunits.

The protein resides in the cytoplasm. The enzyme catalyses Exonucleolytic cleavage in either 5'- to 3'- or 3'- to 5'-direction to yield nucleoside 5'-phosphates.. Bidirectionally degrades single-stranded DNA into large acid-insoluble oligonucleotides, which are then degraded further into small acid-soluble oligonucleotides. The sequence is that of Exodeoxyribonuclease 7 large subunit from Shewanella denitrificans (strain OS217 / ATCC BAA-1090 / DSM 15013).